Consider the following 264-residue polypeptide: MSSVLINSIAVLAGLGFAVGVMLVIASKVFKIDSNPLIDDVASLLPGANCGGCGFAGCAACAEAIVEQGAPVNSCPVGGFEVAKQIGALLGQEVTESEKEFPFVRCQGGNQHCTTLYDYHGVENCKVALMLCDSRKGCTYGCLGLGTCVQACQFGALSMGEDGFPVVNKALCTSCGNCIAACPNGVLTFARDSEKVHVLCRSHDKGKDVKAVCEVGCIGCKKCEKECPAGAIRVTEFLAEIDQEKCTACGACVAICPQKAIELR.

Residues 5 to 25 (LINSIAVLAGLGFAVGVMLVI) traverse the membrane as a helical segment. The 4Fe-4S domain maps to 33–92 (DSNPLIDDVASLLPGANCGGCGFAGCAACAEAIVEQGAPVNSCPVGGFEVAKQIGALLGQ). Positions 50, 53, 58, 75, 138, 142, 148, 152, 172, 175, 178, 182, 217, 220, 223, 227, 246, 249, 252, and 256 each coordinate [4Fe-4S] cluster. 4Fe-4S ferredoxin-type domains lie at 127–162 (VALM…MGED), 163–192 (GFPV…FARD), 207–236 (KDVK…RVTE), and 237–264 (FLAE…IELR).

This sequence belongs to the 4Fe4S bacterial-type ferredoxin family. RnfB subfamily. In terms of assembly, the Rnf complex is probably composed of eight subunits, including RnfA, RnfB, RnfC, RnfD, RnfE and RnfG. It depends on [4Fe-4S] cluster as a cofactor.

Its subcellular location is the cell membrane. In terms of biological role, part of a membrane-bound complex that couples electron transfer with translocation of ions across the membrane. Catalyzes Na(+) transport, most probably coupled to electron transfer from reduced ferredoxin to methanophenazine and heterodisulfide reductase. Involved in heterodisulfide reduction during methanogenesis from acetate. This Methanosarcina acetivorans (strain ATCC 35395 / DSM 2834 / JCM 12185 / C2A) protein is Ion-translocating oxidoreductase complex subunit B.